The following is a 528-amino-acid chain: Chaperonin GroEL, chloroplastic (528 aa).

Residues 29–32 (TLGP), 86–90 (DGTTT), G414, and D496 contribute to the ATP site.

This sequence belongs to the chaperonin (HSP60) family. Forms a cylinder of 14 subunits composed of two heptameric rings stacked back-to-back. Interacts with the co-chaperonin GroES.

It is found in the plastid. The protein resides in the chloroplast. The enzyme catalyses ATP + H2O + a folded polypeptide = ADP + phosphate + an unfolded polypeptide.. In terms of biological role, together with its co-chaperonin GroES, plays an essential role in assisting protein folding. The GroEL-GroES system forms a nano-cage that allows encapsulation of the non-native substrate proteins and provides a physical environment optimized to promote and accelerate protein folding. The polypeptide is Chaperonin GroEL, chloroplastic (Porphyra purpurea (Red seaweed)).